We begin with the raw amino-acid sequence, 88 residues long: Large ribosomal subunit protein bL27 (88 aa).

The segment at 1–24 is disordered; that stretch reads MAHKKAGGSSRNGRDSEGRRLGVK.

The protein belongs to the bacterial ribosomal protein bL27 family.

This chain is Large ribosomal subunit protein bL27, found in Methylobacterium radiotolerans (strain ATCC 27329 / DSM 1819 / JCM 2831 / NBRC 15690 / NCIMB 10815 / 0-1).